Here is a 197-residue protein sequence, read N- to C-terminus: Phosphoheptose isomerase (197 aa).

The SIS domain occupies 36–197; it reads LVHSLAQGGK…VDSLLLGVEE (162 aa). 51–53 is a binding site for substrate; the sequence is NGG. The Zn(2+) site is built by His-60 and Glu-64. Substrate is bound by residues Glu-64, 93-94, 119-121, Ser-124, and Gln-174; these read ND and STS. The Zn(2+) site is built by Gln-174 and His-182.

Belongs to the SIS family. GmhA subfamily. Homotetramer. It depends on Zn(2+) as a cofactor.

The protein resides in the cytoplasm. It carries out the reaction 2 D-sedoheptulose 7-phosphate = D-glycero-alpha-D-manno-heptose 7-phosphate + D-glycero-beta-D-manno-heptose 7-phosphate. It functions in the pathway carbohydrate biosynthesis; D-glycero-D-manno-heptose 7-phosphate biosynthesis; D-glycero-alpha-D-manno-heptose 7-phosphate and D-glycero-beta-D-manno-heptose 7-phosphate from sedoheptulose 7-phosphate: step 1/1. Catalyzes the isomerization of sedoheptulose 7-phosphate in D-glycero-D-manno-heptose 7-phosphate. This Thiobacillus denitrificans (strain ATCC 25259 / T1) protein is Phosphoheptose isomerase.